The primary structure comprises 64 residues: Ferredoxin-2 (64 aa).

In terms of domain architecture, 4Fe-4S ferredoxin-type spans 2–29 (RIHVDQDKCCGAGSCVLAAPDVFDQREE). Positions 10, 16, and 55 each coordinate [3Fe-4S] cluster.

It depends on [3Fe-4S] cluster as a cofactor.

Electron transport protein for the cytochrome P-450-SU2 system. The polypeptide is Ferredoxin-2 (subB) (Streptomyces griseolus).